Reading from the N-terminus, the 513-residue chain is 2,3-bisphosphoglycerate-independent phosphoglycerate mutase (513 aa).

Residues Asp-13 and Ser-63 each coordinate Mn(2+). Ser-63 (phosphoserine intermediate) is an active-site residue. Substrate contacts are provided by residues His-124, 154–155, Arg-186, Arg-192, 262–265, and Lys-335; these read RD and RADR. Positions 402, 406, 443, 444, and 462 each coordinate Mn(2+).

It belongs to the BPG-independent phosphoglycerate mutase family. As to quaternary structure, monomer. It depends on Mn(2+) as a cofactor.

It catalyses the reaction (2R)-2-phosphoglycerate = (2R)-3-phosphoglycerate. It functions in the pathway carbohydrate degradation; glycolysis; pyruvate from D-glyceraldehyde 3-phosphate: step 3/5. Its function is as follows. Catalyzes the interconversion of 2-phosphoglycerate and 3-phosphoglycerate. This is 2,3-bisphosphoglycerate-independent phosphoglycerate mutase from Shewanella amazonensis (strain ATCC BAA-1098 / SB2B).